A 311-amino-acid polypeptide reads, in one-letter code: HPr kinase/phosphorylase (311 aa).

Catalysis depends on residues H139 and K160. G154–S161 provides a ligand contact to ATP. Position 161 (S161) interacts with Mg(2+). The active-site Proton acceptor; for phosphorylation activity. Proton donor; for dephosphorylation activity is D178. The interval L202–D211 is important for the catalytic mechanism of both phosphorylation and dephosphorylation. Mg(2+) is bound at residue E203. Residue R244 is part of the active site. The segment at P265–R270 is important for the catalytic mechanism of dephosphorylation.

The protein belongs to the HPrK/P family. Homohexamer. It depends on Mg(2+) as a cofactor.

It catalyses the reaction [HPr protein]-L-serine + ATP = [HPr protein]-O-phospho-L-serine + ADP + H(+). The catalysed reaction is [HPr protein]-O-phospho-L-serine + phosphate + H(+) = [HPr protein]-L-serine + diphosphate. Its function is as follows. Catalyzes the ATP- as well as the pyrophosphate-dependent phosphorylation of a specific serine residue in HPr, a phosphocarrier protein of the phosphoenolpyruvate-dependent sugar phosphotransferase system (PTS). HprK/P also catalyzes the pyrophosphate-producing, inorganic phosphate-dependent dephosphorylation (phosphorolysis) of seryl-phosphorylated HPr (P-Ser-HPr). The two antagonistic activities of HprK/P are regulated by several intracellular metabolites, which change their concentration in response to the absence or presence of rapidly metabolisable carbon sources (glucose, fructose, etc.) in the growth medium. Therefore, by controlling the phosphorylation state of HPr, HPrK/P is a sensor enzyme that plays a major role in the regulation of carbon metabolism and sugar transport: it mediates carbon catabolite repression (CCR), and regulates PTS-catalyzed carbohydrate uptake and inducer exclusion. This chain is HPr kinase/phosphorylase, found in Exiguobacterium sibiricum (strain DSM 17290 / CCUG 55495 / CIP 109462 / JCM 13490 / 255-15).